Here is a 376-residue protein sequence, read N- to C-terminus: Queuine tRNA-ribosyltransferase (376 aa).

Asp-93 functions as the Proton acceptor in the catalytic mechanism. Substrate contacts are provided by residues 93–97 (DSGGF), Asp-147, Gln-190, and Gly-217. The interval 248 to 254 (GVGTPDD) is RNA binding. The active-site Nucleophile is the Asp-267. The interval 272-276 (TRSGR) is RNA binding; important for wobble base 34 recognition.

The protein belongs to the queuine tRNA-ribosyltransferase family. As to quaternary structure, homodimer. Within each dimer, one monomer is responsible for RNA recognition and catalysis, while the other monomer binds to the replacement base PreQ1.

It catalyses the reaction 7-aminomethyl-7-carbaguanine + guanosine(34) in tRNA = 7-aminomethyl-7-carbaguanosine(34) in tRNA + guanine. It functions in the pathway tRNA modification; tRNA-queuosine biosynthesis. Its function is as follows. Catalyzes the base-exchange of a guanine (G) residue with the queuine precursor 7-aminomethyl-7-deazaguanine (PreQ1) at position 34 (anticodon wobble position) in tRNAs with GU(N) anticodons (tRNA-Asp, -Asn, -His and -Tyr). Catalysis occurs through a double-displacement mechanism. The nucleophile active site attacks the C1' of nucleotide 34 to detach the guanine base from the RNA, forming a covalent enzyme-RNA intermediate. The proton acceptor active site deprotonates the incoming PreQ1, allowing a nucleophilic attack on the C1' of the ribose to form the product. After dissociation, two additional enzymatic reactions on the tRNA convert PreQ1 to queuine (Q), resulting in the hypermodified nucleoside queuosine (7-(((4,5-cis-dihydroxy-2-cyclopenten-1-yl)amino)methyl)-7-deazaguanosine). The protein is Queuine tRNA-ribosyltransferase of Rhizobium meliloti (strain 1021) (Ensifer meliloti).